A 92-amino-acid polypeptide reads, in one-letter code: Cell division protein FtsB (92 aa).

The Cytoplasmic segment spans residues 1-3 (MRL). The chain crosses the membrane as a helical span at residues 4–21 (FVFFMLCLLVLLQYHLWF). Residues 22 to 92 (GKNGLGDRHN…TFFRIVPKED (71 aa)) are Periplasmic-facing. The stretch at 28–62 (DRHNLQEEVTLILENNSELRQRNQMMFSEIKDLKE) forms a coiled coil.

Belongs to the FtsB family. In terms of assembly, part of a complex composed of FtsB, FtsL and FtsQ.

Its subcellular location is the cell inner membrane. In terms of biological role, essential cell division protein. May link together the upstream cell division proteins, which are predominantly cytoplasmic, with the downstream cell division proteins, which are predominantly periplasmic. The chain is Cell division protein FtsB from Psychromonas ingrahamii (strain DSM 17664 / CCUG 51855 / 37).